Consider the following 255-residue polypeptide: MRPVYFLSDFGLEDPYVAVVKAVLAERAPGPAVVDLAHALPPQDLRRAAYALFEALPYLPEGAVVLAVVDPGVGTARRAVAALGRWTYVGPDNGLFTLAWLLDPPRRAFLLEPPRPRPKAALPGWAPGEATFHGRDVFAPAAAHLALGLPPEGLGPEVPVETLARLPLALTEGPEGEVLTFDRFGNAITTLLRAPVGGFVEVGGRRVPVRRTFGEVPEGAPVAYLGSAGLLEVAVNRGSAREALGLKEGMPVRLL.

3 residues coordinate adenosine: aspartate 9, aspartate 70, and asparagine 186. Residues asparagine 186, serine 227, glutamate 232, and valine 235 each contribute to the (R)-S-adenosyl-L-methionine site. Valine 235 lines the adenosine pocket.

It belongs to the SAM hydrolase / SAM-dependent halogenase family. Homotrimer.

It catalyses the reaction (R)-S-adenosyl-L-methionine + H2O = adenosine + L-methionine + H(+). In terms of biological role, catalyzes the hydrolysis of S-adenosyl-L-methionine (SAM) into adenosine and L-methionine. Does not have chlorinase or fluorinase activity. The chain is (R)-S-adenosyl-L-methionine hydrolase from Thermus thermophilus (strain ATCC 27634 / DSM 579 / HB8).